The following is a 1413-amino-acid chain: DNA-directed RNA polymerase subunit beta' (1413 aa).

Residues Cys-70, Cys-72, Cys-85, and Cys-88 each contribute to the Zn(2+) site. Positions 460, 462, and 464 each coordinate Mg(2+). Residues Cys-819, Cys-893, Cys-900, and Cys-903 each contribute to the Zn(2+) site.

This sequence belongs to the RNA polymerase beta' chain family. As to quaternary structure, the RNAP catalytic core consists of 2 alpha, 1 beta, 1 beta' and 1 omega subunit. When a sigma factor is associated with the core the holoenzyme is formed, which can initiate transcription. Mg(2+) is required as a cofactor. The cofactor is Zn(2+).

It catalyses the reaction RNA(n) + a ribonucleoside 5'-triphosphate = RNA(n+1) + diphosphate. Functionally, DNA-dependent RNA polymerase catalyzes the transcription of DNA into RNA using the four ribonucleoside triphosphates as substrates. This is DNA-directed RNA polymerase subunit beta' from Burkholderia ambifaria (strain MC40-6).